Here is an 87-residue protein sequence, read N- to C-terminus: uncharacterized protein (87 aa).

Transmembrane regions (helical) follow at residues Val10–Gly30 and Gly43–Thr63.

The protein localises to the cell membrane. This is an uncharacterized protein from Bacillus subtilis (strain 168).